We begin with the raw amino-acid sequence, 95 residues long: Toxin Tbo-IT2 (95 aa).

An N-terminal signal peptide occupies residues 1-23 (MTMKTLCLSLIVIGVLILVAVKA). Positions 24–53 (EDYVNINSLEEAPEENVNINNLEETPEESR) are excised as a propeptide. 5 disulfides stabilise this stretch: Cys-54/Cys-68, Cys-61/Cys-73, Cys-67/Cys-84, Cys-70/Cys-92, and Cys-75/Cys-82. Cys-92 is modified (cysteine amide).

Belongs to the neurotoxin 02 (plectoxin) family. 02 (plectoxin) subfamily. As to expression, expressed by the venom gland.

Its subcellular location is the secreted. Its function is as follows. This recombinant (non-amidated) toxin shows insecticidal activity on larvae of the housefly Musca domestica and has no activity on a panel of expressed neuronal receptors and ion channels. The sequence is that of Toxin Tbo-IT2 from Tibellus oblongus (Oblong running crab spider).